A 163-amino-acid polypeptide reads, in one-letter code: Iron-sulfur cluster assembly protein 2 (163 aa).

Residues 1–48 (MMMLRQTSRKAYLGLQASPLGLGRRLYHENVIDHFENPRNVGSFNRND) constitute a mitochondrion transit peptide.

The protein belongs to the NifU family. Component of the core Fe-S cluster (ISC) assembly machinery. It depends on [2Fe-2S] cluster as a cofactor. As to expression, mostly expressed in leaves, pollen and flowers.

It is found in the mitochondrion matrix. It functions in the pathway cofactor biosynthesis; iron-sulfur cluster biosynthesis. In terms of biological role, scaffold protein for the de novo synthesis of iron-sulfur (Fe-S) clusters within mitochondria, which is required for maturation of both mitochondrial and cytoplasmic [2Fe-2S] and [4Fe-4S] proteins. First, a [2Fe-2S] cluster is transiently assembled on the scaffold protein ISCU (ISU1, ISU2 or ISU3). In a second step, the cluster is released from ISCU, transferred to a glutaredoxin, followed by the formation of mitochondrial [2Fe-2S] proteins, the synthesis of [4Fe-4S] clusters and their target-specific insertion into the recipient apoproteins. Cluster assembly on ISCU depends on the function of the cysteine desulfurase complex NFS1-ISD11, which serves as the sulfur donor for cluster synthesis, the iron-binding protein frataxin as the putative iron donor, and the electron transfer chain comprised of ferredoxin reductase and ferredoxin, which receive their electrons from NADH. The protein is Iron-sulfur cluster assembly protein 2 (ISU2) of Arabidopsis thaliana (Mouse-ear cress).